Reading from the N-terminus, the 591-residue chain is Aspartate--tRNA ligase (591 aa).

E176 is a binding site for L-aspartate. Residues 200–203 (QILK) are aspartate. R222 contributes to the L-aspartate binding site. Residues 222 to 224 (RDE) and Q231 contribute to the ATP site. Position 450 (H450) interacts with L-aspartate. E484 serves as a coordination point for ATP. An L-aspartate-binding site is contributed by R491. 536–539 (GLDR) contacts ATP.

The protein belongs to the class-II aminoacyl-tRNA synthetase family. Type 1 subfamily. As to quaternary structure, homodimer.

It is found in the cytoplasm. The enzyme catalyses tRNA(Asp) + L-aspartate + ATP = L-aspartyl-tRNA(Asp) + AMP + diphosphate. Catalyzes the attachment of L-aspartate to tRNA(Asp) in a two-step reaction: L-aspartate is first activated by ATP to form Asp-AMP and then transferred to the acceptor end of tRNA(Asp). The polypeptide is Aspartate--tRNA ligase (Listeria monocytogenes serotype 4a (strain HCC23)).